We begin with the raw amino-acid sequence, 494 residues long: Alpha-amylase A (494 aa).

An N-terminal signal peptide occupies residues 1–18; the sequence is MFLAKSIVCLALLAVANA. Position 19 is a pyrrolidone carboxylic acid (Gln-19). Cysteines 46 and 102 form a disulfide. Residues Asn-116, Arg-165, and Asp-174 each contribute to the Ca(2+) site. An intrachain disulfide couples Cys-153 to Cys-167. Arg-202 is a binding site for chloride. Asp-204 (nucleophile) is an active-site residue. His-208 is a binding site for Ca(2+). Residue Glu-241 is the Proton donor of the active site. Asn-304 and Arg-343 together coordinate chloride. Cystine bridges form between Cys-376/Cys-382 and Cys-448/Cys-460.

Belongs to the glycosyl hydrolase 13 family. In terms of assembly, monomer. It depends on Ca(2+) as a cofactor. Chloride serves as cofactor.

The catalysed reaction is Endohydrolysis of (1-&gt;4)-alpha-D-glucosidic linkages in polysaccharides containing three or more (1-&gt;4)-alpha-linked D-glucose units.. In Drosophila melanogaster (Fruit fly), this protein is Alpha-amylase A (Amy-p).